The chain runs to 89 residues: Large ribosomal subunit protein L37-2 (89 aa).

Residues C19, C22, C34, and C37 each coordinate Zn(2+). The C4-type zinc-finger motif lies at 19–37; the sequence is CRRCGNSSYHLQKSKCSQC.

The protein belongs to the eukaryotic ribosomal protein eL37 family. It depends on Zn(2+) as a cofactor.

In terms of biological role, binds to the 23S rRNA. The sequence is that of Large ribosomal subunit protein L37-2 from Drosophila melanogaster (Fruit fly).